A 408-amino-acid polypeptide reads, in one-letter code: Bifunctional enzyme IspD/IspF (408 aa).

A 2-C-methyl-D-erythritol 4-phosphate cytidylyltransferase region spans residues 1–247 (MNAPFEKDRR…GPAMTELPDI (247 aa)). Residues 248–408 (RVGNGYDVHG…TVAYPGSLGN (161 aa)) form a 2-C-methyl-D-erythritol 2,4-cyclodiphosphate synthase region. A divalent metal cation is bound by residues Asp-254 and His-256. 4-CDP-2-C-methyl-D-erythritol 2-phosphate is bound by residues 254–256 (DVH) and 280–281 (HS). Residue His-288 coordinates a divalent metal cation. 4-CDP-2-C-methyl-D-erythritol 2-phosphate contacts are provided by residues 302-304 (DIG), 378-381 (TTNE), Phe-385, and Arg-388.

It in the N-terminal section; belongs to the IspD/TarI cytidylyltransferase family. IspD subfamily. The protein in the C-terminal section; belongs to the IspF family. A divalent metal cation serves as cofactor.

The enzyme catalyses 2-C-methyl-D-erythritol 4-phosphate + CTP + H(+) = 4-CDP-2-C-methyl-D-erythritol + diphosphate. It catalyses the reaction 4-CDP-2-C-methyl-D-erythritol 2-phosphate = 2-C-methyl-D-erythritol 2,4-cyclic diphosphate + CMP. Its pathway is isoprenoid biosynthesis; isopentenyl diphosphate biosynthesis via DXP pathway; isopentenyl diphosphate from 1-deoxy-D-xylulose 5-phosphate: step 2/6. The protein operates within isoprenoid biosynthesis; isopentenyl diphosphate biosynthesis via DXP pathway; isopentenyl diphosphate from 1-deoxy-D-xylulose 5-phosphate: step 4/6. In terms of biological role, bifunctional enzyme that catalyzes the formation of 4-diphosphocytidyl-2-C-methyl-D-erythritol from CTP and 2-C-methyl-D-erythritol 4-phosphate (MEP) (IspD), and catalyzes the conversion of 4-diphosphocytidyl-2-C-methyl-D-erythritol 2-phosphate (CDP-ME2P) to 2-C-methyl-D-erythritol 2,4-cyclodiphosphate (ME-CPP) with a corresponding release of cytidine 5-monophosphate (CMP) (IspF). The protein is Bifunctional enzyme IspD/IspF of Chelativorans sp. (strain BNC1).